Consider the following 346-residue polypeptide: Uroporphyrinogen decarboxylase (346 aa).

Substrate contacts are provided by residues 26-30 (RQAGR), D76, Y153, S208, and H323.

The protein belongs to the uroporphyrinogen decarboxylase family. As to quaternary structure, homodimer.

It localises to the cytoplasm. It carries out the reaction uroporphyrinogen III + 4 H(+) = coproporphyrinogen III + 4 CO2. Its pathway is porphyrin-containing compound metabolism; protoporphyrin-IX biosynthesis; coproporphyrinogen-III from 5-aminolevulinate: step 4/4. Its function is as follows. Catalyzes the decarboxylation of four acetate groups of uroporphyrinogen-III to yield coproporphyrinogen-III. The sequence is that of Uroporphyrinogen decarboxylase from Prochlorococcus marinus (strain MIT 9215).